A 554-amino-acid chain; its full sequence is MAIQHPDIQPAVNHSVQVAIAGAGPVGLMMANYLGQMGIDVLVVEKLDKLIDYPRAIGIDDEALRTMQSVGLVDNVLPHTTPWHAMRFLTPKGRCFADIQPMTDEFGWPRRNAFIQPQVDAVMLEGLSRFPNVRCLFSRELEAFSQQDDEVTVHLKTAEGQREIVKAQWLVACDGGASFVRRTLNVPFEGKTAPNQWIVVDIANDPLSTPHIYLCCDPVRPYVSAALPHAVRRFEFMVMPGETEEQLREPQNMRKLLSKVLPNPDNVELIRQRVYTHNARLAQRFRIDRVLLAGDAAHIMPVWQGQGYNSGMRDAFNLAWKLALVIQGKARDALLDTYQQERRDHAKAMIDLSVTAGNVLAPPKRWQGTLRDGVSWLLNYLPPVKRYFLEMRFKPMPQYYGGALVREGEAKHSPVGKMFIQPKVTLENGDVTLLDNAIGANFAVIGWGCNPLWGMSDEQIQQWRALGTRFIQVVPEVQIHTAQDNHDGVLRVGDTQGRLRSWFAQHNASLVVMRPDRFVAATAIPQTLGKTLNKLASVMTLTRPDADVSVEKVA.

Residues 17 to 46 (QVAI…VVEK) and 285 to 295 (FRIDRVLLAGD) each bind FAD.

Belongs to the PheA/TfdB FAD monooxygenase family. FAD is required as a cofactor.

The enzyme catalyses 3-(3-hydroxyphenyl)propanoate + NADH + O2 + H(+) = 3-(2,3-dihydroxyphenyl)propanoate + NAD(+) + H2O. It carries out the reaction (2E)-3-(3-hydroxyphenyl)prop-2-enoate + NADH + O2 + H(+) = (2E)-3-(2,3-dihydroxyphenyl)prop-2-enoate + NAD(+) + H2O. It functions in the pathway aromatic compound metabolism; 3-phenylpropanoate degradation. In terms of biological role, catalyzes the insertion of one atom of molecular oxygen into position 2 of the phenyl ring of 3-(3-hydroxyphenyl)propionate (3-HPP) and hydroxycinnamic acid (3HCI). The sequence is that of 3-(3-hydroxy-phenyl)propionate/3-hydroxycinnamic acid hydroxylase from Escherichia coli O81 (strain ED1a).